Reading from the N-terminus, the 527-residue chain is uncharacterized protein (527 aa).

In terms of domain architecture, PE spans 1–93 (MSYMIAVPDM…AGAYASAEAT (93 aa)). Composition is skewed to gly residues over residues 264–286 (IHGHGGVGGDGGTGGQGGDGVQG), 292–384 (GAAG…AGNG), and 472–515 (NGGD…GGSR). Disordered stretches follow at residues 264–384 (IHGH…AGNG) and 472–527 (NGGD…TPGQ).

This sequence belongs to the mycobacterial PE family. PGRS subfamily.

This is an uncharacterized protein from Mycobacterium tuberculosis (strain CDC 1551 / Oshkosh).